The sequence spans 824 residues: RelA-associated inhibitor (824 aa).

At Met-1 the chain carries N-acetylmethionine. Disordered stretches follow at residues 48 to 87 (SLWS…SPQK) and 99 to 271 (RSES…YERL). Residues Ser-84, Ser-100, Ser-102, Ser-110, Ser-113, Ser-119, and Ser-120 each carry the phosphoserine modification. The residue at position 123 (Thr-123) is a Phosphothreonine. Ser-134 is subject to Phosphoserine. Omega-N-methylarginine is present on residues Arg-137, Arg-142, Arg-144, Arg-160, Arg-167, and Arg-180. 3 positions are modified to phosphoserine: Ser-183, Ser-187, and Ser-203. Arg-205 carries the omega-N-methylarginine modification. Thr-275 bears the Phosphothreonine mark. Ser-279 carries the post-translational modification Phosphoserine. Disordered regions lie at residues 291–370 (SLDG…RPIP) and 388–501 (RAVL…QTVP). Phosphothreonine is present on Thr-307. Phosphoserine is present on residues Ser-315, Ser-331, and Ser-338. Thr-340 bears the Phosphothreonine mark. A compositionally biased stretch (low complexity) spans 359 to 370 (QPRSTPRQRPIP). Pro residues predominate over residues 400 to 424 (APPPKLPPQPPPQPQMQPQPQPQPQ). Residues 425 to 440 (MQPQSQAQPQTPAPQQ) show a composition bias toward low complexity. Residues Ser-522, Ser-563, and Ser-593 each carry the phosphoserine modification. Positions 547–614 (FHRHGGPGPG…SVLRKVGSPR (68 aa)) are disordered. The segment covering 575-597 (PPAPAPPAPIPPPAPPQSSPPEQ) has biased composition (pro residues). ANK repeat units follow at residues 655 to 684 (EGIT…NVNS) and 688 to 717 (HGWT…AIFA). The region spanning 754–816 (MHNGVVYALW…PRNYFGLFPR (63 aa)) is the SH3 domain.

The protein belongs to the iASPP family. In terms of assembly, interacts with TP63 and TP73. Interacts with RELA NF-kappa-B subunit and with SP1 via its C-terminal part. Interacts (via SH3 domain and ANK repeats) with p53/TP53; the interaction inhibits pro-apoptotic activity of p53/TP53. In terms of tissue distribution, most abundant in skin with high levels also found in heart, testis and stomach. In 15.5 dpc embryonic heart, expressed at higher levels in atria than ventricles.

Its subcellular location is the cytoplasm. It is found in the nucleus. Functionally, regulator that plays a central role in regulation of apoptosis and transcription via its interaction with NF-kappa-B and p53/TP53 proteins. Inhibits p53/TP53 function, possibly by preventing the association between p53/TP53 and ASPP1 or ASPP2, and therefore suppressing the subsequent activation of apoptosis. Is involved in NF-kappa-B dependent negative regulation of inflammatory response. The chain is RelA-associated inhibitor from Mus musculus (Mouse).